A 232-amino-acid polypeptide reads, in one-letter code: Small ribosomal subunit protein uS3 (232 aa).

In terms of domain architecture, KH type-2 spans 39–107 (VRRFLEQRLK…PVHVNIEEVR (69 aa)).

Belongs to the universal ribosomal protein uS3 family. In terms of assembly, part of the 30S ribosomal subunit. Forms a tight complex with proteins S10 and S14.

In terms of biological role, binds the lower part of the 30S subunit head. Binds mRNA in the 70S ribosome, positioning it for translation. The polypeptide is Small ribosomal subunit protein uS3 (Chromohalobacter salexigens (strain ATCC BAA-138 / DSM 3043 / CIP 106854 / NCIMB 13768 / 1H11)).